Reading from the N-terminus, the 323-residue chain is Glutathione synthetase (323 aa).

Residues 133–317 (KMYALQFQSV…IGDQTIAALE (185 aa)) form the ATP-grasp domain. 159 to 215 (LDELRAAVLKPLGGKAGEGILFLDPGDRNFNSLVEISTQQGQLPVMVQQYLPEAKDG) serves as a coordination point for ATP. Mg(2+)-binding residues include Glu-288 and Asn-290.

The protein belongs to the prokaryotic GSH synthase family. It depends on Mg(2+) as a cofactor. Requires Mn(2+) as cofactor.

The enzyme catalyses gamma-L-glutamyl-L-cysteine + glycine + ATP = glutathione + ADP + phosphate + H(+). The protein operates within sulfur metabolism; glutathione biosynthesis; glutathione from L-cysteine and L-glutamate: step 2/2. The sequence is that of Glutathione synthetase from Synechococcus elongatus (strain ATCC 33912 / PCC 7942 / FACHB-805) (Anacystis nidulans R2).